A 20-amino-acid chain; its full sequence is Peroxidase 1 (20 aa).

Histidine 14 provides a ligand contact to heme. Threonine 15 contacts Ca(2+).

Belongs to the peroxidase family. Classical plant (class III) peroxidase subfamily. It depends on Ca(2+) as a cofactor. Heme b is required as a cofactor.

Its subcellular location is the secreted. It carries out the reaction 2 a phenolic donor + H2O2 = 2 a phenolic radical donor + 2 H2O. Functionally, removal of H(2)O(2), oxidation of toxic reductants, biosynthesis and degradation of lignin, suberization, auxin catabolism, response to environmental stresses such as wounding, pathogen attack and oxidative stress. These functions might be dependent on each isozyme/isoform in each plant tissue. The polypeptide is Peroxidase 1 (Betula pendula (European white birch)).